We begin with the raw amino-acid sequence, 107 residues long: Stellacyanin (107 aa).

The Phytocyanin domain occupies 1 to 105; that stretch reads TVYTVGDSAG…GQKVHINVTV (105 aa). N28 carries N-linked (GlcNAc...) asparagine glycosylation. A Cu cation-binding site is contributed by H46. C59 and C93 form a disulfide bridge. Residue N60 is glycosylated (N-linked (GlcNAc...) asparagine). Cu cation contacts are provided by C87, H92, and Q97. An N-linked (GlcNAc...) asparagine glycan is attached at N102.

The polypeptide is Stellacyanin (Toxicodendron vernicifluum (Japanese lacquer tree)).